We begin with the raw amino-acid sequence, 98 residues long: Citrate lyase acyl carrier protein 1 (98 aa).

O-(phosphoribosyl dephospho-coenzyme A)serine is present on Ser-14.

Belongs to the CitD family. As to quaternary structure, oligomer with a subunit composition of (alpha,beta,gamma)6.

It is found in the cytoplasm. Its function is as follows. Covalent carrier of the coenzyme of citrate lyase. The protein is Citrate lyase acyl carrier protein 1 of Salmonella paratyphi A (strain ATCC 9150 / SARB42).